Consider the following 340-residue polypeptide: Glyceraldehyde-3-phosphate dehydrogenase, cytosolic (340 aa).

NAD(+) contacts are provided by residues Arg16 to Ile17, Asp38, and Arg85. Residues Ser156–Thr158, Thr187, Thr216–Gly217, and Arg239 contribute to the D-glyceraldehyde 3-phosphate site. The active-site Nucleophile is Cys157. NAD(+) is bound at residue Asn321.

Belongs to the glyceraldehyde-3-phosphate dehydrogenase family. Homotetramer.

It is found in the cytoplasm. The enzyme catalyses D-glyceraldehyde 3-phosphate + phosphate + NAD(+) = (2R)-3-phospho-glyceroyl phosphate + NADH + H(+). It functions in the pathway carbohydrate degradation; glycolysis; pyruvate from D-glyceraldehyde 3-phosphate: step 1/5. Key enzyme in glycolysis that catalyzes the first step of the pathway by converting D-glyceraldehyde 3-phosphate (G3P) into 3-phospho-D-glyceroyl phosphate. Essential for the maintenance of cellular ATP levels and carbohydrate metabolism. The chain is Glyceraldehyde-3-phosphate dehydrogenase, cytosolic from Taxus baccata (English yew).